The chain runs to 223 residues: Protein disulfide-isomerase-like protein EhSep2 (223 aa).

An N-terminal signal peptide occupies residues 1–17 (MALRSLTLLCAAAGASA). Positions 18–125 (GAIELTPDNF…DELKKFAENE (108 aa)) constitute a Thioredoxin domain. Residue Sec47 is a non-standard amino acid, selenocysteine. A coiled-coil region spans residues 155–201 (EKRTEMLETLKKELADAESTHEALLKELQATYKESMDKLEKLKEESA). The disordered stretch occupies residues 201-223 (APKIKLLKAATPAPKAEGAKDEV). Positions 203-216 (KIKLLKAATPAPKA) are enriched in low complexity. Positions 220–223 (KDEV) match the Prevents secretion from ER motif.

It belongs to the protein disulfide isomerase family.

The protein resides in the endoplasmic reticulum lumen. In Emiliania huxleyi (Coccolithophore), this protein is Protein disulfide-isomerase-like protein EhSep2 (SEP2).